The primary structure comprises 393 residues: Formate-dependent phosphoribosylglycinamide formyltransferase (393 aa).

N(1)-(5-phospho-beta-D-ribosyl)glycinamide contacts are provided by residues 22 to 23 and E82; that span reads EL. ATP-binding positions include R114, K155, 160–165, 195–198, and E203; these read SSGKGQ and EGFI. The ATP-grasp domain occupies 119–308; the sequence is RLAAEELDLP…QFALHARAIL (190 aa). Mg(2+) contacts are provided by E267 and E279. Residues D286, K356, and 363–364 contribute to the N(1)-(5-phospho-beta-D-ribosyl)glycinamide site; that span reads RR.

This sequence belongs to the PurK/PurT family. In terms of assembly, homodimer.

It catalyses the reaction N(1)-(5-phospho-beta-D-ribosyl)glycinamide + formate + ATP = N(2)-formyl-N(1)-(5-phospho-beta-D-ribosyl)glycinamide + ADP + phosphate + H(+). The protein operates within purine metabolism; IMP biosynthesis via de novo pathway; N(2)-formyl-N(1)-(5-phospho-D-ribosyl)glycinamide from N(1)-(5-phospho-D-ribosyl)glycinamide (formate route): step 1/1. Involved in the de novo purine biosynthesis. Catalyzes the transfer of formate to 5-phospho-ribosyl-glycinamide (GAR), producing 5-phospho-ribosyl-N-formylglycinamide (FGAR). Formate is provided by PurU via hydrolysis of 10-formyl-tetrahydrofolate. The protein is Formate-dependent phosphoribosylglycinamide formyltransferase of Pseudomonas putida (strain W619).